Reading from the N-terminus, the 372-residue chain is Innexin shaking-B (372 aa).

Topologically, residues 1–21 (MLDIFRGLKNLVKVSHVKTDS) are cytoplasmic. The helical transmembrane segment at 22–42 (IVFRLHYSITVMILMSFSLII) threads the bilayer. Residues 43-110 (TTRQYVGNPI…PADKKHYKYY (68 aa)) lie on the Extracellular side of the membrane. Residues 111–131 (QWVCFCLFFQAILFYTPRWLW) traverse the membrane as a helical segment. Over 132–182 (KSWEGGKIHALIMDLDIGICSEAEKKQKKKLLLDYLWENLRYHNWWAYRYY) the chain is Cytoplasmic. The chain crosses the membrane as a helical span at residues 183-203 (VCELLALINVIGQMFLMNRFF). The Extracellular portion of the chain corresponds to 204–267 (DGEFITFGLK…ILPLNVVNEK (64 aa)). A helical transmembrane segment spans residues 268–288 (IYIFLWFWFILLTFLTLLTLI). The Cytoplasmic segment spans residues 289–372 (YRVVIIFSPR…PGLKGEIQDA (84 aa)).

It belongs to the pannexin family. Monomer (isoform Lethal). As to expression, isoform Neural is expressed in synapses of giant fibers (GF), in a large thoracic cell in location of postsynaptic target and optic lobe lamina and medulla. Isoform Lethal is expressed in embryonic mesodermal derivatives. During metamorphosis, both isoforms are dynamically expressed in pupal nervous system.

Its subcellular location is the cell membrane. It localises to the cell junction. The protein resides in the gap junction. Functionally, structural component of the gap junctions at electrical synapses in distal and mid-depth levels in the lamina. Isoform Lethal forms voltage sensitive intercellular channels through homotypic interactions. This chain is Innexin shaking-B (shakB), found in Drosophila melanogaster (Fruit fly).